The sequence spans 111 residues: Ig kappa chain V-III region PC 2485/PC 4039 (111 aa).

The framework-1 stretch occupies residues 1-23; it reads DIVLTQSPASLAVSLGQRATISC. Cysteines 23 and 92 form a disulfide. Positions 24 to 38 are complementarity-determining-1; it reads RASKSVSTSGYSYMH. The interval 39-53 is framework-2; it reads WYQQKPGQPPKLLIY. Residues 54–60 are complementarity-determining-2; that stretch reads LASSLES. The segment at 61 to 92 is framework-3; sequence GVPARFSGSGSGTDFTLNIQPVEEEDAAIYYC. The segment at 93–101 is complementarity-determining-3; sequence QHSRELPLT. The framework-4 stretch occupies residues 102–111; it reads FGAGTKLELK.

The polypeptide is Ig kappa chain V-III region PC 2485/PC 4039 (Mus musculus (Mouse)).